Reading from the N-terminus, the 1279-residue chain is Sterol regulatory element-binding protein cleavage-activating protein (1279 aa).

Topologically, residues 1 to 18 are cytoplasmic; the sequence is MTLTERLREKISRAFYNH. The chain crosses the membrane as a helical span at residues 19 to 39; the sequence is GLLCASYPIPIILFTGFCILA. Over 40-279 the chain is Lumenal; that stretch reads CCYPLLKLPL…SLVHVHFKEE (240 aa). A loop-1 region spans residues 46-284; the sequence is KLPLPGTGPV…HFKEEIGVAE (239 aa). A disordered region spans residues 60 to 80; it reads PVKDYSPPPVDSDRKQGEPTE. N263 carries an N-linked (GlcNAc...) asparagine glycan. The helical transmembrane segment at 280–300 threads the bilayer; sequence IGVAELIPLVTTYIILFAYIY. The SSD domain occupies 284–442; sequence ELIPLVTTYI…MLFFTTVLSI (159 aa). Topologically, residues 301–312 are cytoplasmic; the sequence is FSTRKIDMVKSK. Residues 313–333 form a helical membrane-spanning segment; that stretch reads WGLALAAVVTVLSSLLMSVGL. Residues 334 to 344 lie on the Lumenal side of the membrane; that stretch reads CTLFGLTPTLN. Residues 345–365 form a helical membrane-spanning segment; sequence GGEIFPYLVVVIGLENVLVLT. Topologically, residues 366-401 are cytoplasmic; it reads KSVVSTPVDLEVKLRIAQGLSSESWSIMKNMATELG. A helical membrane pass occupies residues 402–422; it reads IILIGYFTLVPAIQEFCLFAV. V423 is a topological domain (lumenal). A helical transmembrane segment spans residues 424 to 444; sequence GLVSDFFLQMLFFTTVLSIDI. The Cytoplasmic portion of the chain corresponds to 445-518; the sequence is RRMELADLNK…FLARTRLAQR (74 aa). The ER export signal signature appears at 447 to 452; sequence MELADL. Glycyl lysine isopeptide (Lys-Gly) (interchain with G-Cter in ubiquitin) cross-links involve residues K454 and K466. Residues 519 to 539 traverse the membrane as a helical segment; it reads LIMAGTVVWIGILVYTDPAGL. The loop-7 stretch occupies residues 535-710; sequence DPAGLRNYLA…QAHGDVTLYK (176 aa). The Lumenal segment spans residues 540 to 709; it reads RNYLAAQVTE…VQAHGDVTLY (170 aa). The interval 579 to 615 is disordered; the sequence is IFPPDAPKLPENQTSPGESPERGGPAEVVHDSPVPEV. Residues N590 and N641 are each glycosylated (N-linked (GlcNAc...) asparagine). Residues 668 to 696 are disordered; it reads EGRHPQDGRSAWPPPGPIPAGHWEAGPKG. Residues 710 to 730 form a helical membrane-spanning segment; it reads KVAALGLATGIVLVLLLLCLY. Residues 731 to 1279 lie on the Cytoplasmic side of the membrane; sequence RVLCPRNYGQ…YVPSVLEKLD (549 aa). The interaction with SREBF2 stretch occupies residues 731-1279; sequence RVLCPRNYGQ…YVPSVLEKLD (549 aa). Residues 771–811 form a WD 1 repeat; sequence VLRGHLMDIECLASDGMLLVSCCLAGHVCVWDAQTGDCLTR. The segment at 811-904 is disordered; it reads RIPRPGRQRR…PRHRAVCGRS (94 aa). Residues S822, S838, and S851 each carry the phosphoserine modification. A compositionally biased stretch (polar residues) spans 877 to 891; sequence IDTNFSAQPRSSQPT. Phosphoserine is present on residues S907 and S937. The interval 931 to 962 is disordered; the sequence is PALRPPSPGPVLSQAPEDEGGSPEKGSPSLAW. 2 WD repeats span residues 952–1002 and 1005–1042; these read SPEK…LCCS and EVSS…ALSP. An Omega-N-methylarginine modification is found at R1051. WD repeat units follow at residues 1077–1114, 1117–1155, 1158–1195, and 1197–1235; these read AHQK…CLFT, GHSG…RVSH, AHRG…KFYS, and QQDL…LLQT.

The protein belongs to the WD repeat SCAP family. As to quaternary structure, membrane region forms a homotetramer. Component of the SCAP-SREBP complex (composed of SCAP and SREBF1/SREBP1 or SREBF2/SREBP2); interacts with SREBF1/SREBP1 or SREBF2/SREBP2 through its C-terminal cytoplasmic domain. Forms a ternary complex with INSIG1 or INSIG2 through its transmembrane domains at high sterol concentrations. Interacts with PAQR3; the interaction anchors the SCAP-SREBP complex to the Golgi apparatus in low cholesterol conditions. Interacts with the SEC23-SEC24 complex in a SAR1-GTP-dependent manner through an ER export signal in its third cytoplasmic loop. Interacts with RNF139; the interaction inhibits the interaction of SCAP with SEC24B and hampering the ER to Golgi transport of the SCAP-SREBP complex. Interacts with SPRING1. Ubiquitinated at Lys-454 and Lys-466. RNF145 triggers ubiquitination of SCAP, likely inhibiting SCAP-SREBP complex transport to the Golgi apparatus and the subsequent processing/maturation of SREBF2/SREBP2.

The protein resides in the endoplasmic reticulum membrane. It localises to the golgi apparatus membrane. It is found in the cytoplasmic vesicle. The protein localises to the COPII-coated vesicle membrane. Its function is as follows. Escort protein required for cholesterol as well as lipid homeostasis. Regulates export of the SCAP-SREBP complex from the endoplasmic reticulum to the Golgi upon low cholesterol, thereby regulating the processing of sterol regulatory element-binding proteins (SREBPs) SREBF1/SREBP1 and SREBF2/SREBP2. At high sterol concentrations, formation of a ternary complex with INSIG (INSIG1 or INSIG2) leads to mask the ER export signal in SCAP, promoting retention of the complex in the endoplasmic reticulum. Low sterol concentrations trigger release of INSIG, a conformational change in the SSD domain of SCAP, unmasking of the ER export signal, promoting recruitment into COPII-coated vesicles and transport of the SCAP-SREBP to the Golgi: in the Golgi, SREBPs are then processed, releasing the transcription factor fragment of SREBPs from the membrane, its import into the nucleus and up-regulation of LDLR, INSIG1 and the mevalonate pathway. Binds cholesterol via its SSD domain. This chain is Sterol regulatory element-binding protein cleavage-activating protein, found in Homo sapiens (Human).